Reading from the N-terminus, the 185-residue chain is Ribosome-recycling factor (185 aa).

This sequence belongs to the RRF family.

It is found in the cytoplasm. Functionally, responsible for the release of ribosomes from messenger RNA at the termination of protein biosynthesis. May increase the efficiency of translation by recycling ribosomes from one round of translation to another. The protein is Ribosome-recycling factor of Pasteurella multocida (strain Pm70).